A 207-amino-acid polypeptide reads, in one-letter code: Myosin light chain 6B (207 aa).

Residues 1-50 (MPPKKDAPVKKPAGPSISKPAAKSTPGTPLAKAKAEPAAPQAPAKSQEPP) form a disordered region. Residues 36–50 (EPAAPQAPAKSQEPP) show a composition bias toward low complexity. EF-hand domains lie at 63 to 98 (DQLE…LGQN), 140 to 175 (GTYE…LGEK), and 175 to 207 (KMTE…ILSL).

In terms of assembly, myosin is a hexamer of 2 heavy chains and 4 light chains.

In terms of biological role, regulatory light chain of myosin. Does not bind calcium. This is Myosin light chain 6B from Mus musculus (Mouse).